A 262-amino-acid polypeptide reads, in one-letter code: Insulin-like growth factor-binding protein 1 (262 aa).

A signal peptide spans 1–25 (MPEVPAVRAWPLLLSLALQLGAAAG). An IGFBP N-terminal domain is found at 28-108 (QPLHCAPCSA…TRGQGACMPA (81 aa)). Cystine bridges form between cysteine 32-cysteine 59, cysteine 35-cysteine 61, cysteine 43-cysteine 62, cysteine 50-cysteine 65, cysteine 72-cysteine 85, and cysteine 79-cysteine 105. A disordered region spans residues 101 to 133 (GQGACMPAPSAEATETKDPAAPETTSPESTEMT). The span at 121–131 (APETTSPESTE) shows a compositional bias: low complexity. 3 positions are modified to phosphoserine: serine 126, serine 129, and serine 147. Tyrosine 161 bears the Phosphotyrosine mark. Positions 176 to 254 (KEPCQRELYK…STAVRGDPKC (79 aa)) constitute a Thyroglobulin type-1 domain. Cystine bridges form between cysteine 179–cysteine 209, cysteine 220–cysteine 231, and cysteine 233–cysteine 254. Serine 245 is modified (phosphoserine). A Cell attachment site motif is present at residues 249–251 (RGD).

Binds equally well IGF1 and IGF2. Interacts with integrin ITGA5:ITGB1. Interacts with VHL; this interaction inhibits HIF1A degradation.

It is found in the secreted. Multifunctional protein that plays a critical role in regulating the availability of IGFs such as IGF1 and IGF2 to their receptors and thereby regulates IGF-mediated cellular processes including cell migration, proliferation, differentiation or apoptosis in a cell-type specific manner. Also plays a positive role in cell migration by interacting with integrin ITGA5:ITGB1 through its RGD motif. Mechanistically, binding to integrins leads to activation of focal adhesion kinase/PTK2 and stimulation of the mitogen-activated protein kinase (MAPK) pathway. Regulates cardiomyocyte apoptosis by suppressing HIF-1alpha/HIF1A degradation through ubiquitination. The sequence is that of Insulin-like growth factor-binding protein 1 (IGFBP1) from Sus scrofa (Pig).